The chain runs to 575 residues: Mitochondrial 2-methylisocitrate lyase ICL2 (575 aa).

Residue Cys238 is part of the active site.

Belongs to the isocitrate lyase/PEP mutase superfamily. Isocitrate lyase family.

It localises to the mitochondrion matrix. The enzyme catalyses (2S,3R)-3-hydroxybutane-1,2,3-tricarboxylate = pyruvate + succinate. It participates in organic acid metabolism; propanoate degradation. Catalyzes the formation of pyruvate and succinate from 2-methylisocitrate during the metabolism of endogenous propionyl-CoA. Does not act on isocitrate. In Saccharomyces cerevisiae (strain ATCC 204508 / S288c) (Baker's yeast), this protein is Mitochondrial 2-methylisocitrate lyase ICL2 (ICL2).